An 89-amino-acid polypeptide reads, in one-letter code: MTEAKKSLKRTLIGKVVSDKRAKTVTVLVERRVKHELYGKIVSLSSKYHAHDEKGEYHTGDVIEITESRPISKTKNWVVTRLVEKAAAV.

The protein belongs to the universal ribosomal protein uS17 family. Part of the 30S ribosomal subunit.

In terms of biological role, one of the primary rRNA binding proteins, it binds specifically to the 5'-end of 16S ribosomal RNA. This chain is Small ribosomal subunit protein uS17, found in Polaromonas sp. (strain JS666 / ATCC BAA-500).